Consider the following 254-residue polypeptide: Undecaprenyl-diphosphatase (254 aa).

8 helical membrane passes run 1 to 21 (MGII…FLPV), 41 to 61 (AHKA…VFLY), 75 to 95 (LIIA…IIKG), 96 to 116 (LFSP…FIAV), 130 to 150 (ILKI…IAMI), 174 to 194 (AEFS…YDIM), 210 to 230 (TGFV…IGFV), and 234 to 254 (NFVP…LFVL).

This sequence belongs to the UppP family.

It is found in the cell inner membrane. It catalyses the reaction di-trans,octa-cis-undecaprenyl diphosphate + H2O = di-trans,octa-cis-undecaprenyl phosphate + phosphate + H(+). Catalyzes the dephosphorylation of undecaprenyl diphosphate (UPP). Confers resistance to bacitracin. This Persephonella marina (strain DSM 14350 / EX-H1) protein is Undecaprenyl-diphosphatase.